The primary structure comprises 209 residues: Orotate phosphoribosyltransferase (209 aa).

5-phospho-alpha-D-ribose 1-diphosphate-binding positions include arginine 96, lysine 100, histidine 102, and 122–130; that span reads EDLISTGGS. Serine 126 contacts orotate.

Belongs to the purine/pyrimidine phosphoribosyltransferase family. PyrE subfamily. As to quaternary structure, homodimer. It depends on Mg(2+) as a cofactor.

The catalysed reaction is orotidine 5'-phosphate + diphosphate = orotate + 5-phospho-alpha-D-ribose 1-diphosphate. It functions in the pathway pyrimidine metabolism; UMP biosynthesis via de novo pathway; UMP from orotate: step 1/2. Functionally, catalyzes the transfer of a ribosyl phosphate group from 5-phosphoribose 1-diphosphate to orotate, leading to the formation of orotidine monophosphate (OMP). The protein is Orotate phosphoribosyltransferase of Streptococcus pyogenes serotype M12 (strain MGAS2096).